The sequence spans 273 residues: Large ribosomal subunit protein uL2 (273 aa).

A disordered region spans residues 228 to 273 (VDHPHGGGEGKTSGGRHPVTPWGFPTKGKKTRKNKRTSKFIVKKRK). The span at 254–273 (KGKKTRKNKRTSKFIVKKRK) shows a compositional bias: basic residues.

This sequence belongs to the universal ribosomal protein uL2 family. Part of the 50S ribosomal subunit. Forms a bridge to the 30S subunit in the 70S ribosome.

In terms of biological role, one of the primary rRNA binding proteins. Required for association of the 30S and 50S subunits to form the 70S ribosome, for tRNA binding and peptide bond formation. It has been suggested to have peptidyltransferase activity; this is somewhat controversial. Makes several contacts with the 16S rRNA in the 70S ribosome. This chain is Large ribosomal subunit protein uL2, found in Rickettsia africae (strain ESF-5).